The chain runs to 378 residues: Tyrosinase-like protein phomQ1' (378 aa).

The helical transmembrane segment at Thr-42 to Ser-62 threads the bilayer. Cu cation-binding residues include His-130 and His-139. Asn-209 is a glycosylation site (N-linked (GlcNAc...) asparagine). Positions 279 and 305 each coordinate Cu cation.

Belongs to the tyrosinase family. Cu(2+) is required as a cofactor.

The protein resides in the membrane. Its pathway is mycotoxin biosynthesis. In terms of biological role, tyrosinase-like protein; part of the gene cluster that mediates the biosynthesis of the phomopsins, a group of hexapeptide mycotoxins which infects lupins and causes lupinosis disease in livestock. The pathway starts with the processing of the precursor phomA' by several endopeptidases including kexin proteases as well as the cluster-specific S41 family peptidase phomP1 and the oligopeptidase phomG' to produce 10 identical copies of the hexapeptide Tyr-Val-Ile-Pro-Ile-Asp. After being excised from the precursor peptide, the core peptides are cyclized and modified post-translationally by enzymes encoded within the gene cluster. The timing and order of proteolysis of the phomA' precursor and PTMs are still unknown. Two tyrosinase-like enzymes, phomQ1' and phomQ2, catalyze the chlorination and hydroxylation of Tyr, respectively. PhomYb, is proposed to be involved in the construction of the macrocyclic structure. The other 4 ustYa family proteins may be involved in PTMs that generate the unique structure of phomopsin A. PhomYa' is required for the hydroxylation of C-beta of Tyr. PhomYc', phomYd', and phomYe are responsible for the biosynthesis of 2,3-dehydroisoleucine (dIle), 2,3-dehydroaspartic acid (dAsp), and 3,4-dehydroproline (dPro), respectively. While dIle formation by phomYc' is indispensable for the installation of dAsp by phomYd', the order of the other PTMs have not been elucidated yet. Most of the biosynthetic enzymes likely have broad substrate specificity, and thus, there might be a metabolic grid from a precursor to phomopsin A. The enzyme(s) responsible for the biosynthesis of 3,4-dehydrovaline (dVal) have also not been identified yet. Finally, phomM' acts as an S-adenosylmethionine-dependent alpha-N-methyltransferase that catalyzes two successive N-methylation reactions, converting N-desmethyl-phomopsin A to phomopsin A and phomopsin A further to an N,N-dimethylated congener called phomopsin E. This chain is Tyrosinase-like protein phomQ1', found in Diaporthe leptostromiformis (Lupinosis disease fungus).